The primary structure comprises 100 residues: DNA-directed RNA polymerase subunit Rpo11 (100 aa).

It belongs to the archaeal Rpo11/eukaryotic RPB11/RPC19 RNA polymerase subunit family. In terms of assembly, part of the RNA polymerase complex.

Its subcellular location is the cytoplasm. It catalyses the reaction RNA(n) + a ribonucleoside 5'-triphosphate = RNA(n+1) + diphosphate. In terms of biological role, DNA-dependent RNA polymerase (RNAP) catalyzes the transcription of DNA into RNA using the four ribonucleoside triphosphates as substrates. This chain is DNA-directed RNA polymerase subunit Rpo11, found in Picrophilus torridus (strain ATCC 700027 / DSM 9790 / JCM 10055 / NBRC 100828 / KAW 2/3).